The sequence spans 562 residues: F-box and WD repeat domain-containing 11-A (562 aa).

A homodimerization domain D region spans residues 87–136; that stretch reads GSFDKEKDLCIQLFDQWSESDQVEFVEHLIARMCHYQHGHINSYLKPMLQ. The F-box domain occupies 149-187; it reads DHIAENILSFLDARSLCSAELVCREWQRVISDGMLWKKL. 7 WD repeats span residues 256–295, 296–335, 336–375, 379–418, 419–458, 459–491, and 508–538; these read RSEN…CLKV, LTGH…VLNT, LIHH…DISL, LVGH…FVRT, LNGH…CLRV, LEGH…WDLQ, and LVEH…LIWD.

In terms of assembly, self-associates. Component of the SCF(FBXW11) complex.

The protein localises to the cytoplasm. The protein resides in the nucleus. It functions in the pathway protein modification; protein ubiquitination. Functionally, substrate recognition component of a SCF (SKP1-CUL1-F-box protein) E3 ubiquitin-protein ligase complex which mediates the ubiquitination and subsequent proteasomal degradation of target proteins. Probably recognizes and binds to phosphorylated target proteins: the interaction with substrates requires the phosphorylation of the two serine residues in the substrates' destruction motif D-S-G-X(2,3,4)-S. SCF(FBXW11) mediates the ubiquitination of phosphorylated CTNNB1 and participates in Wnt signaling regulation. Participates in Wnt signaling regulation, and plays a role in eye and jaw development. SCF(FBXW11) plays a key role in NF-kappa-B activation by mediating ubiquitination of phosphorylated NFKBIA, leading to its degradation by the proteasome, thereby allowing the associated NF-kappa-B complex to translocate into the nucleus and to activate transcription. This Danio rerio (Zebrafish) protein is F-box and WD repeat domain-containing 11-A.